A 648-amino-acid polypeptide reads, in one-letter code: Mitochondrial Rho GTPase 1 (648 aa).

The Cytoplasmic portion of the chain corresponds to 1–619 (MARYAAGAVD…KHYNRLINRS (619 aa)). Position 14 is a phosphoserine (serine 14). The Miro 1 domain occupies 15-182 (PKSVRIVVVG…FYYAQKTVLH (168 aa)). 2 EF-hand domains span residues 198-233 (RCVR…CFHA) and 319-354 (AAID…APES). Ca(2+)-binding residues include aspartate 211, aspartate 213, aspartate 215, glutamate 222, aspartate 332, aspartate 334, aspartate 336, asparagine 338, and glutamate 343. A Miro 2 domain is found at 427-595 (RKVFQCFVFG…FRKILTAAQH (169 aa)). The helical transmembrane segment at 620 to 640 (LMAVSIGAAAVVVGLAAYRVY) threads the bilayer. The Mitochondrial intermembrane portion of the chain corresponds to 641-648 (ATRKSSSA).

It belongs to the mitochondrial Rho GTPase family. As to expression, expressed in roots, leaves, stems, flowers and siliques.

It is found in the mitochondrion outer membrane. Functionally, mitochondrial GTPase required to maintain proper development, morphology and intracellular distribution of mitochondria, which in turn are essential for the progress of embryonic cell division, development of haploid male and female gametes, and pollen tube growth. This Arabidopsis thaliana (Mouse-ear cress) protein is Mitochondrial Rho GTPase 1.